The primary structure comprises 213 residues: Protein Syd (213 aa).

Belongs to the Syd family.

The protein resides in the cell inner membrane. Its function is as follows. Interacts with the SecY protein in vivo. May bind preferentially to an uncomplexed state of SecY, thus functioning either as a chelating agent for excess SecY in the cell or as a regulatory factor that negatively controls the translocase function. The protein is Protein Syd of Shewanella pealeana (strain ATCC 700345 / ANG-SQ1).